The following is a 202-amino-acid chain: 3-isopropylmalate dehydratase small subunit (202 aa).

It belongs to the LeuD family. LeuD type 1 subfamily. As to quaternary structure, heterodimer of LeuC and LeuD.

The enzyme catalyses (2R,3S)-3-isopropylmalate = (2S)-2-isopropylmalate. The protein operates within amino-acid biosynthesis; L-leucine biosynthesis; L-leucine from 3-methyl-2-oxobutanoate: step 2/4. Functionally, catalyzes the isomerization between 2-isopropylmalate and 3-isopropylmalate, via the formation of 2-isopropylmaleate. The protein is 3-isopropylmalate dehydratase small subunit of Blochmanniella pennsylvanica (strain BPEN).